The primary structure comprises 129 residues: Small ribosomal subunit protein uS9 (129 aa).

A disordered region spans residues 107-129 (SRTVERKKYGRRKARRSPQFSKR). Positions 114–129 (KYGRRKARRSPQFSKR) are enriched in basic residues.

This sequence belongs to the universal ribosomal protein uS9 family.

The sequence is that of Small ribosomal subunit protein uS9 from Campylobacter jejuni subsp. jejuni serotype O:23/36 (strain 81-176).